Reading from the N-terminus, the 126-residue chain is MMTPTIPVALFDRLLVEGISPHELVRRKLMCLFNSCVVPGGETLPPLLTRGMPEWHEVNVGDKRVLNWFCRELRAAILRYEPSINMLEVSVKDAHHQTLALSLEAMLQDEPEPLRLEIAYSNGRWR.

The protein belongs to the GpW/Gp25 family. IraD subfamily. In terms of assembly, interacts with RssB.

The protein localises to the cytoplasm. Inhibits RpoS proteolysis by regulating RssB activity, thereby increasing the stability of the sigma stress factor RpoS during oxidative stress. Its effect on RpoS stability is due to its interaction with RssB, which probably blocks the interaction of RssB with RpoS, and the consequent delivery of the RssB-RpoS complex to the ClpXP protein degradation pathway. The polypeptide is Anti-adapter protein IraD (Salmonella paratyphi A (strain ATCC 9150 / SARB42)).